A 287-amino-acid chain; its full sequence is Leucine-rich repeat-containing protein 72 (287 aa).

LRR repeat units follow at residues 46–67 (DVFE…SRFK), 68–89 (KLKY…TRNY), 90–111 (CLTE…HYLP), and 112–133 (SLHI…VKEL). Positions 147–185 (NPLCQYNLYRLYIIYHLPGVELLDRNQVTEKERRSMITI) constitute an LRRCT domain.

This is Leucine-rich repeat-containing protein 72 (LRRC72) from Homo sapiens (Human).